The chain runs to 429 residues: Tol-Pal system protein TolB (429 aa).

A signal peptide spans Met1–Ala28.

This sequence belongs to the TolB family. The Tol-Pal system is composed of five core proteins: the inner membrane proteins TolA, TolQ and TolR, the periplasmic protein TolB and the outer membrane protein Pal. They form a network linking the inner and outer membranes and the peptidoglycan layer.

It localises to the periplasm. Part of the Tol-Pal system, which plays a role in outer membrane invagination during cell division and is important for maintaining outer membrane integrity. In Polaromonas naphthalenivorans (strain CJ2), this protein is Tol-Pal system protein TolB.